Reading from the N-terminus, the 513-residue chain is 2-isopropylmalate synthase (513 aa).

A Pyruvate carboxyltransferase domain is found at 4 to 268; it reads IKIFDTTLRD…ETGIKTELIY (265 aa). Mn(2+)-binding residues include D13, H203, H205, and N239. The tract at residues 392–513 is regulatory domain; sequence KLVHFHVHTG…GLLRKNGGAE (122 aa).

This sequence belongs to the alpha-IPM synthase/homocitrate synthase family. LeuA type 1 subfamily. In terms of assembly, homodimer. The cofactor is Mn(2+).

It localises to the cytoplasm. It carries out the reaction 3-methyl-2-oxobutanoate + acetyl-CoA + H2O = (2S)-2-isopropylmalate + CoA + H(+). Its pathway is amino-acid biosynthesis; L-leucine biosynthesis; L-leucine from 3-methyl-2-oxobutanoate: step 1/4. Catalyzes the condensation of the acetyl group of acetyl-CoA with 3-methyl-2-oxobutanoate (2-ketoisovalerate) to form 3-carboxy-3-hydroxy-4-methylpentanoate (2-isopropylmalate). This chain is 2-isopropylmalate synthase, found in Thermotoga maritima (strain ATCC 43589 / DSM 3109 / JCM 10099 / NBRC 100826 / MSB8).